The chain runs to 228 residues: Cytidylate kinase (228 aa).

An ATP-binding site is contributed by 11 to 19 (GPAGTGKSS).

The protein belongs to the cytidylate kinase family. Type 1 subfamily.

Its subcellular location is the cytoplasm. The enzyme catalyses CMP + ATP = CDP + ADP. It catalyses the reaction dCMP + ATP = dCDP + ADP. In Mycobacterium avium (strain 104), this protein is Cytidylate kinase.